Consider the following 117-residue polypeptide: Aspartate 1-decarboxylase (117 aa).

Residue S25 is the Schiff-base intermediate with substrate; via pyruvic acid of the active site. Position 25 is a pyruvic acid (Ser) (S25). T57 contributes to the substrate binding site. The Proton donor role is filled by Y58. Position 73 to 75 (73 to 75 (GAA)) interacts with substrate.

Belongs to the PanD family. As to quaternary structure, heterooctamer of four alpha and four beta subunits. Pyruvate is required as a cofactor. Is synthesized initially as an inactive proenzyme, which is activated by self-cleavage at a specific serine bond to produce a beta-subunit with a hydroxyl group at its C-terminus and an alpha-subunit with a pyruvoyl group at its N-terminus.

It is found in the cytoplasm. It carries out the reaction L-aspartate + H(+) = beta-alanine + CO2. It functions in the pathway cofactor biosynthesis; (R)-pantothenate biosynthesis; beta-alanine from L-aspartate: step 1/1. Catalyzes the pyruvoyl-dependent decarboxylation of aspartate to produce beta-alanine. The sequence is that of Aspartate 1-decarboxylase from Bacteroides fragilis (strain ATCC 25285 / DSM 2151 / CCUG 4856 / JCM 11019 / LMG 10263 / NCTC 9343 / Onslow / VPI 2553 / EN-2).